Here is a 177-residue protein sequence, read N- to C-terminus: MSGQNIDPAANQVRQKERPRDMTTSKERHSVSKRLQQELRTLLMSGDPGITAFPDGDNLFKWVATLDGPKDTVYESLKYKLTLEFPSDYPYKPPVVKFTTPCWHPNVDQSGNICLDILKENWTASYDVRTILLSLQSLLGEPNNASPLNAQAADMWSNQTEYKKVLHEKYKTAQSDK.

The tract at residues 1-31 (MSGQNIDPAANQVRQKERPRDMTTSKERHSV) is disordered. Over residues 14-30 (RQKERPRDMTTSKERHS) the composition is skewed to basic and acidic residues. One can recognise a UBC core domain in the interval 30–175 (SVSKRLQQEL…LHEKYKTAQS (146 aa)). Cys114 (glycyl thioester intermediate) is an active-site residue.

Belongs to the ubiquitin-conjugating enzyme family. In terms of assembly, component of the APC/C complex. Autoubiquitinated by the APC/C complex, leading to its degradation by the proteasome.

It catalyses the reaction S-ubiquitinyl-[E1 ubiquitin-activating enzyme]-L-cysteine + [E2 ubiquitin-conjugating enzyme]-L-cysteine = [E1 ubiquitin-activating enzyme]-L-cysteine + S-ubiquitinyl-[E2 ubiquitin-conjugating enzyme]-L-cysteine.. The catalysed reaction is S-ubiquitinyl-[E1 ubiquitin-activating enzyme]-L-cysteine + [acceptor protein]-L-lysine = [E1 ubiquitin-activating enzyme]-L-cysteine + N(6)-monoubiquitinyl-[acceptor protein]-L-lysine.. Its pathway is protein modification; protein ubiquitination. In terms of biological role, catalyzes the covalent attachment of ubiquitin to other proteins. Acts as an essential factor of the anaphase promoting complex/cyclosome (APC/C), a cell cycle-regulated ubiquitin ligase that is essential for the transition from metaphase to anaphase in mitosis. Involved in both degradation of proteins responsible for maintaining sister chromatid cohesion at the onset of anaphase and of mitotic cyclins A and B at the exit of mitosis. Acts by initiating polyubiquitin chains on APC/C substrates, leading to the degradation of APC/C substrates by the proteasome and promoting mitotic exit. The polypeptide is Ubiquitin-conjugating enzyme E2 C (UBE2C) (Spisula solidissima (Atlantic surf-clam)).